The sequence spans 1526 residues: uncharacterized protein (1526 aa).

WD repeat units follow at residues 334–376 (CTKE…EHIS), 862–901 (KILG…ELLT), 904–945 (GHNS…KTFK), 946–985 (GHTS…CLYI), 988–1027 (GHTG…CFYI), 1030–1069 (GHTS…CLYT), 1072–1111 (GHTS…CLYT), 1114–1153 (GYTS…CLYT), 1156–1195 (GHTN…CLYI), 1198–1237 (GHTS…CLCT), 1240–1279 (GHTS…CLHT), 1282–1321 (GHTN…CLHT), 1324–1363 (GHTS…CLYT), 1366–1405 (GHTN…CLYT), 1408–1447 (GHNN…CLYT), and 1450–1491 (GHIN…KTLK). One can recognise a Pentapeptide repeat domain in the interval 823-862 (MVLEGRDLSHTVIIGADFTNTSLRCVNFTEANLAYSVFTK).

This is an uncharacterized protein from Nostoc sp. (strain PCC 7120 / SAG 25.82 / UTEX 2576).